Here is a 93-residue protein sequence, read N- to C-terminus: NADH-ubiquinone oxidoreductase chain 4L (93 aa).

3 helical membrane passes run methionine 1 to arginine 21, leucine 29 to methionine 49, and leucine 54 to valine 74.

The protein belongs to the complex I subunit 4L family.

Its subcellular location is the mitochondrion membrane. The catalysed reaction is a ubiquinone + NADH + 5 H(+)(in) = a ubiquinol + NAD(+) + 4 H(+)(out). In terms of biological role, core subunit of the mitochondrial membrane respiratory chain NADH dehydrogenase (Complex I) that is believed to belong to the minimal assembly required for catalysis. Complex I functions in the transfer of electrons from NADH to the respiratory chain. The immediate electron acceptor for the enzyme is believed to be ubiquinone. This chain is NADH-ubiquinone oxidoreductase chain 4L (ND4L), found in Mytilus edulis (Blue mussel).